Here is a 450-residue protein sequence, read N- to C-terminus: MFKSMISSIVMRSMQKKINAQTISETDVQAVLKEIRIALLDADVNLLVVKNFIKAIREQTVGQTVEPGQDLQKWLLKVIKQELINILSQPNQEITSKRPLKVMVVGLQGSGKTTTCGKLAVWLKKQFQQKAMLVALDIYRPAAIDQLATLAEQTESVFFAKGTQAPDQTTKEAVKTFKESGCQAIICDTAGRLQTNQELMDELVAIKNELHPDEILMVVDGLSGQEIINVAKEFHNRLKLTGFIITKLDSDARAGAALSLTSLLEVPIKLMGTSEKLTGLEQFHPERIASRILGLGDVMTLVEKAEEVFDKQSLTKTVSKMFLGKMDLEDLLLYMEQMNQMGSVSSIVKMLPGNLTVSDDHVESIEAKVKLWKVLINSMTREERRHPKLINRDPSRKQRIIKGSGRKMDELNKLMKEWSKLQTKTAEMGRMLKGGKNPFSGFGGLGGLGF.

Residues Gly106 to Thr113, Asp188 to Arg192, and Thr246 to Asp249 each bind GTP.

Belongs to the GTP-binding SRP family. SRP54 subfamily. In terms of assembly, part of the signal recognition particle protein translocation system, which is composed of SRP and FtsY.

It localises to the cytoplasm. The enzyme catalyses GTP + H2O = GDP + phosphate + H(+). Involved in targeting and insertion of nascent membrane proteins into the cytoplasmic membrane. Binds to the hydrophobic signal sequence of the ribosome-nascent chain (RNC) as it emerges from the ribosomes. The SRP-RNC complex is then targeted to the cytoplasmic membrane where it interacts with the SRP receptor FtsY. The sequence is that of Signal recognition particle protein from Mycoplasma pneumoniae (strain ATCC 29342 / M129 / Subtype 1) (Mycoplasmoides pneumoniae).